A 239-amino-acid polypeptide reads, in one-letter code: Large ribosomal subunit protein uL2 (239 aa).

It belongs to the universal ribosomal protein uL2 family.

It is found in the cytoplasm. This chain is Large ribosomal subunit protein uL2 (RPL8), found in Encephalitozoon cuniculi (strain GB-M1) (Microsporidian parasite).